Reading from the N-terminus, the 808-residue chain is Disks large-associated protein 5 (808 aa).

A phosphoserine mark is found at serine 66 and serine 70. Positions 88–119 form a coiled coil; it reads QRKQLLQKYKEEKQLQKLKEQREKAKRGVFKV. Residues 134–282 form a disordered region; sequence QRGAKAEPEK…QTRETSEMGP (149 aa). Composition is skewed to basic and acidic residues over residues 135–145 and 180–193; these read RGAKAEPEKAF and QTSEKQPLDRERKV. The residue at position 201 (serine 201) is a Phosphoserine. 2 stretches are compositionally biased toward basic and acidic residues: residues 232 to 241 and 249 to 278; these read TNEKGSERMR and KKPEGKPDKVIPSKVERDEKHLDSQTRETS. Serine 328 carries the phosphoserine modification. Phosphothreonine occurs at positions 337 and 386. The interval 377–413 is disordered; sequence HVLNQKGASTSDSNHASVKGVPCSEGSEGQTSQPPHD. Polar residues predominate over residues 382-392; sequence KGASTSDSNHA. Serine 598 carries the phosphoserine modification. Phosphoserine; by AURKA is present on serine 607. The residue at position 612 (serine 612) is a Phosphoserine. Phosphothreonine is present on threonine 617. Serine 620 carries the post-translational modification Phosphoserine. The tract at residues 629 to 654 is disordered; the sequence is RAAGDLLRQKMPLKKPDPQSSKSEHV. Residues 642–654 show a composition bias toward basic and acidic residues; that stretch reads KKPDPQSSKSEHV. A Phosphothreonine modification is found at threonine 728. Positions 735 to 757 are disordered; sequence SNPETNTSSQSNTSQEEAEASQS. Position 743 is a phosphoserine (serine 743). A Phosphoserine; by AURKA modification is found at serine 797. The residue at position 806 (serine 806) is a Phosphoserine.

Belongs to the SAPAP family. Interacts with CDC2. Interacts with the C-terminal proline-rich region of FBXO7. Recruited by FBXO7 to a SCF (SKP1-CUL1-F-box) protein complex in a CDC2/Cyclin B-phosphorylation dependent manner. Interacts with CDH1. Ubiquitinated, leading to its degradation. In terms of processing, decreased phosphorylation levels are associated with the differentiation of intestinal epithelial cells. In terms of tissue distribution, expressed at low levels in normal resting liver. Up-regulated in regenerating liver after partial hepatectomy.

It is found in the nucleus. It localises to the cytoplasm. Its subcellular location is the cytoskeleton. The protein resides in the spindle. Functionally, potential cell cycle regulator that may play a role in carcinogenesis of cancer cells. Mitotic phosphoprotein regulated by the ubiquitin-proteasome pathway. Key regulator of adherens junction integrity and differentiation that may be involved in CDH1-mediated adhesion and signaling in epithelial cells. The protein is Disks large-associated protein 5 (Dlgap5) of Mus musculus (Mouse).